The primary structure comprises 477 residues: Ectonucleotide pyrophosphatase/phosphodiesterase family member 5 (477 aa).

The first 24 residues, methionine 1 to glutamine 24, serve as a signal peptide directing secretion. The Zn(2+) site is built by aspartate 36 and threonine 72. The active-site Nucleophile is the threonine 72. N-linked (GlcNAc...) asparagine glycans are attached at residues asparagine 101 and asparagine 158. Positions 191, 195, 238, and 239 each coordinate Zn(2+). Asparagine 292 and asparagine 329 each carry an N-linked (GlcNAc...) asparagine glycan. Histidine 339 provides a ligand contact to Zn(2+). N-linked (GlcNAc...) asparagine glycans are attached at residues asparagine 362, asparagine 369, asparagine 382, and asparagine 389. Residues proline 432–isoleucine 452 form a helical membrane-spanning segment.

This sequence belongs to the nucleotide pyrophosphatase/phosphodiesterase family. Requires Zn(2+) as cofactor. Post-translationally, N-glycosylated.

Its subcellular location is the secreted. It is found in the membrane. Functionally, can hydrolyze NAD but cannot hydrolyze nucleotide di- and triphosphates. Lacks lysopholipase D activity. May play a role in neuronal cell communication. This chain is Ectonucleotide pyrophosphatase/phosphodiesterase family member 5, found in Homo sapiens (Human).